A 289-amino-acid chain; its full sequence is Bis(5'-nucleosyl)-tetraphosphatase, symmetrical (289 aa).

The protein belongs to the Ap4A hydrolase family.

The catalysed reaction is P(1),P(4)-bis(5'-adenosyl) tetraphosphate + H2O = 2 ADP + 2 H(+). In terms of biological role, hydrolyzes diadenosine 5',5'''-P1,P4-tetraphosphate to yield ADP. The polypeptide is Bis(5'-nucleosyl)-tetraphosphatase, symmetrical (Yersinia pestis bv. Antiqua (strain Antiqua)).